We begin with the raw amino-acid sequence, 299 residues long: Protein bem46 (299 aa).

A helical transmembrane segment spans residues 15 to 32; the sequence is YSGMASLAVTLIALGFLY.

The protein belongs to the serine esterase family.

The protein resides in the membrane. Functionally, suppressor of bem1/bud5. In Schizosaccharomyces pombe (strain 972 / ATCC 24843) (Fission yeast), this protein is Protein bem46 (bem46).